The chain runs to 50 residues: Sperm protamine P1 (50 aa).

This sequence belongs to the protamine P1 family. In terms of assembly, cross-linked by interchain disulfide bonds around the DNA-helix. In terms of tissue distribution, testis.

The protein resides in the nucleus. It is found in the chromosome. Its function is as follows. Protamines substitute for histones in the chromatin of sperm during the haploid phase of spermatogenesis. They compact sperm DNA into a highly condensed, stable and inactive complex. In Pan paniscus (Pygmy chimpanzee), this protein is Sperm protamine P1 (PRM1).